We begin with the raw amino-acid sequence, 545 residues long: Chaperonin GroEL (545 aa).

Residues threonine 30 to proline 33, lysine 51, aspartate 87 to threonine 91, glycine 415, and aspartate 495 each bind ATP.

The protein belongs to the chaperonin (HSP60) family. In terms of assembly, forms a cylinder of 14 subunits composed of two heptameric rings stacked back-to-back. Interacts with the co-chaperonin GroES.

It is found in the cytoplasm. The enzyme catalyses ATP + H2O + a folded polypeptide = ADP + phosphate + an unfolded polypeptide.. In terms of biological role, together with its co-chaperonin GroES, plays an essential role in assisting protein folding. The GroEL-GroES system forms a nano-cage that allows encapsulation of the non-native substrate proteins and provides a physical environment optimized to promote and accelerate protein folding. This is Chaperonin GroEL from Shewanella sp. (strain W3-18-1).